Reading from the N-terminus, the 1314-residue chain is E3 ubiquitin-protein ligase RNF123 (1314 aa).

A2 carries the N-acetylalanine modification. One can recognise a B30.2/SPRY domain in the interval 74 to 254 (VDNEEEESQG…VAFNFGSRPL (181 aa)). S675 carries the phosphoserine modification. R683 is subject to Asymmetric dimethylarginine. Positions 968-974 (WILVRLW) are interaction with NFKB1. The Zn(2+) site is built by C1254, C1257, C1269, H1271, C1274, C1277, C1288, and C1291. The RING-type zinc finger occupies 1254-1292 (CPICYAHPISAVFQPCGHKSCKACINQHLMNNKDCFFCK).

As to quaternary structure, component of the KPC complex composed of RNF123/KPC1 and UBAC1/KPC2. Interacts with UBAC1 and CDKN1B via its N-terminal domain. Interacts with RIGI (via N-terminus) and IFIH1 (via N-terminus). In terms of processing, ubiquitinated, leading to its degradation. Deubiquitinated by USP19, thereby stimulating CDKN1B ubiquitin-dependent degradation.

The protein localises to the cytoplasm. It catalyses the reaction S-ubiquitinyl-[E2 ubiquitin-conjugating enzyme]-L-cysteine + [acceptor protein]-L-lysine = [E2 ubiquitin-conjugating enzyme]-L-cysteine + N(6)-ubiquitinyl-[acceptor protein]-L-lysine.. It participates in protein modification; protein ubiquitination. Its function is as follows. Catalytic subunit of the KPC complex that acts as E3 ubiquitin-protein ligase. Promotes the ubiquitination and proteasome-mediated degradation of CDKN1B which is the cyclin-dependent kinase inhibitor at the G0-G1 transition of the cell cycle. Also acts as a key regulator of the NF-kappa-B signaling by promoting maturation of the NFKB1 component of NF-kappa-B: acts by catalyzing ubiquitination of the NFKB1 p105 precursor, leading to limited proteasomal degradation of NFKB1 p105 and generation of the active NFKB1 p50 subunit. Also functions as an inhibitor of innate antiviral signaling mediated by RIGI and IFIH1 independently of its E3 ligase activity. Interacts with the N-terminal CARD domains of RIGI and IFIH1 and competes with the downstream adapter MAVS. The sequence is that of E3 ubiquitin-protein ligase RNF123 from Homo sapiens (Human).